We begin with the raw amino-acid sequence, 119 residues long: uncharacterized protein (119 aa).

2 helical membrane passes run 61 to 80 and 87 to 103; these read LISA…LLSV and VVGV…VDII.

The protein localises to the membrane. This is an uncharacterized protein from Saccharomyces cerevisiae (strain ATCC 204508 / S288c) (Baker's yeast).